Here is a 205-residue protein sequence, read N- to C-terminus: Cytochrome c biogenesis ATP-binding export protein CcmA (205 aa).

The region spanning 2-204 (LEVSNLTAIR…SPKLRKIKLG (203 aa)) is the ABC transporter domain. Position 34-41 (34-41 (GRNGTGKT)) interacts with ATP.

The protein belongs to the ABC transporter superfamily. CcmA exporter (TC 3.A.1.107) family. In terms of assembly, the complex is composed of two ATP-binding proteins (CcmA) and two transmembrane proteins (CcmB).

It localises to the cell inner membrane. It catalyses the reaction heme b(in) + ATP + H2O = heme b(out) + ADP + phosphate + H(+). In terms of biological role, part of the ABC transporter complex CcmAB involved in the biogenesis of c-type cytochromes; once thought to export heme, this seems not to be the case, but its exact role is uncertain. Responsible for energy coupling to the transport system. This Vibrio vulnificus (strain CMCP6) protein is Cytochrome c biogenesis ATP-binding export protein CcmA.